The chain runs to 239 residues: Mediator of RNA polymerase II transcription subunit 4 (239 aa).

The interval 168–221 (QLFSEQPPKTNEPTETETEIDANKAVEEKTKMNYPASPTFTTQEENKEVESPAN) is disordered. Basic and acidic residues predominate over residues 188 to 198 (DANKAVEEKTK). A phosphoserine mark is found at Ser204 and Ser218.

It belongs to the Mediator complex subunit 4 family. Component of the Mediator complex.

It is found in the nucleus. Component of the Mediator complex, a coactivator involved in the regulated transcription of nearly all RNA polymerase II-dependent genes. Mediator functions as a bridge to convey information from gene-specific regulatory proteins to the basal RNA polymerase II transcription machinery. Mediator is recruited to promoters by direct interactions with regulatory proteins and serves as a scaffold for the assembly of a functional preinitiation complex with RNA polymerase II and the general transcription factors. The protein is Mediator of RNA polymerase II transcription subunit 4 (med4) of Schizosaccharomyces pombe (strain 972 / ATCC 24843) (Fission yeast).